A 167-amino-acid polypeptide reads, in one-letter code: Transcription factor E (167 aa).

The region spanning 5 to 87 (ENPIHRAYLL…LWKICPESLD (83 aa)) is the HTH TFE/IIEalpha-type domain.

It belongs to the TFE family. In terms of assembly, monomer. Interaction with RNA polymerase subunits RpoF and RpoE is necessary for Tfe stimulatory transcription activity. Able to interact with Tbp and RNA polymerase in the absence of DNA promoter. Interacts both with the preinitiation and elongation complexes.

In terms of biological role, transcription factor that plays a role in the activation of archaeal genes transcribed by RNA polymerase. Facilitates transcription initiation by enhancing TATA-box recognition by TATA-box-binding protein (Tbp), and transcription factor B (Tfb) and RNA polymerase recruitment. Not absolutely required for transcription in vitro, but particularly important in cases where Tbp or Tfb function is not optimal. It dynamically alters the nucleic acid-binding properties of RNA polymerases by stabilizing the initiation complex and destabilizing elongation complexes. Seems to translocate with the RNA polymerase following initiation and acts by binding to the non template strand of the transcription bubble in elongation complexes. This is Transcription factor E from Methanothrix thermoacetophila (strain DSM 6194 / JCM 14653 / NBRC 101360 / PT) (Methanosaeta thermophila).